The sequence spans 260 residues: tRNA pseudouridine synthase A (260 aa).

Catalysis depends on D60, which acts as the Nucleophile. Residue Y118 participates in substrate binding.

The protein belongs to the tRNA pseudouridine synthase TruA family. Homodimer.

It carries out the reaction uridine(38/39/40) in tRNA = pseudouridine(38/39/40) in tRNA. Its function is as follows. Formation of pseudouridine at positions 38, 39 and 40 in the anticodon stem and loop of transfer RNAs. In Leuconostoc citreum (strain KM20), this protein is tRNA pseudouridine synthase A.